A 174-amino-acid chain; its full sequence is Shikimate kinase (174 aa).

An ATP-binding site is contributed by 15–20; sequence GTGKST. Ser-19 is a binding site for Mg(2+). Positions 37, 61, and 82 each coordinate substrate. Arg-120 contributes to the ATP binding site. Arg-138 contacts substrate.

Belongs to the shikimate kinase family. Monomer. Mg(2+) serves as cofactor.

It localises to the cytoplasm. The catalysed reaction is shikimate + ATP = 3-phosphoshikimate + ADP + H(+). It participates in metabolic intermediate biosynthesis; chorismate biosynthesis; chorismate from D-erythrose 4-phosphate and phosphoenolpyruvate: step 5/7. Functionally, catalyzes the specific phosphorylation of the 3-hydroxyl group of shikimic acid using ATP as a cosubstrate. In Staphylococcus aureus (strain Mu3 / ATCC 700698), this protein is Shikimate kinase.